The chain runs to 367 residues: Heme A synthase (367 aa).

The next 5 membrane-spanning stretches (helical) occupy residues 26 to 46, 111 to 131, 139 to 159, 174 to 194, and 212 to 232; these read IRGW…VGGA, LLAR…WVTG, LPLL…WWMV, LATH…IYRG, and AGAI…VAGL. Position 274 (His-274) interacts with heme. 3 helical membrane-spanning segments follow: residues 276–296, 305–325, and 327–347; these read LGAY…LRAA, SVLL…TLLL, and VPIG…GFAI. Heme is bound at residue His-335.

This sequence belongs to the COX15/CtaA family. Type 2 subfamily. In terms of assembly, interacts with CtaB. Requires heme b as cofactor.

It localises to the cell membrane. It carries out the reaction Fe(II)-heme o + 2 A + H2O = Fe(II)-heme a + 2 AH2. It participates in porphyrin-containing compound metabolism; heme A biosynthesis; heme A from heme O: step 1/1. Its function is as follows. Catalyzes the conversion of heme O to heme A by two successive hydroxylations of the methyl group at C8. The first hydroxylation forms heme I, the second hydroxylation results in an unstable dihydroxymethyl group, which spontaneously dehydrates, resulting in the formyl group of heme A. The sequence is that of Heme A synthase from Rhizobium meliloti (strain 1021) (Ensifer meliloti).